A 448-amino-acid chain; its full sequence is Receptor homology region, transmembrane domain- and RING domain-containing protein 2 (448 aa).

The N-terminal stretch at 1–20 (MNRALVLLLYVCTVSCLASS) is a signal peptide. Residues 21-163 (KVILMRNNIT…IPSFENSAWS (143 aa)) are Lumenal-facing. 2 N-linked (GlcNAc...) asparagine glycosylation sites follow: N28 and N74. The 85-residue stretch at 60-144 (DACQNLMNKP…ETGEVLKEYA (85 aa)) folds into the PA domain. Cysteines 62 and 87 form a disulfide. A helical transmembrane segment spans residues 164–184 (IMAVSFISLLAMSAVLATCFF). Residues 185-448 (VRRHRIRRRT…YASANSLPDC (264 aa)) are Cytoplasmic-facing. The RING-type; atypical zinc-finger motif lies at 232 to 274 (CAICLEDYTVGDKLRLLPCCHKFHAACVDSWLTSWRTFCPVCK). A compositionally biased stretch (low complexity) spans 344 to 378 (QSSSNRRSPPISVSRSSVDLRQQAASPSPSPSQRS). Disordered stretches follow at residues 344 to 380 (QSSSNRRSPPISVSRSSVDLRQQAASPSPSPSQRSYI) and 402 to 424 (MSPYRPSPSNASPAMAGSSNYPL). Polar residues predominate over residues 408-423 (SPSNASPAMAGSSNYP).

Its subcellular location is the protein storage vacuole membrane. It is found in the golgi apparatus membrane. Involved in the trafficking of vacuolar proteins. May function as a sorting receptor for protein trafficking to the protein storage vacuole (PSV). This Arabidopsis thaliana (Mouse-ear cress) protein is Receptor homology region, transmembrane domain- and RING domain-containing protein 2 (RMR2).